Here is a 512-residue protein sequence, read N- to C-terminus: Neuronal acetylcholine receptor subunit alpha-3 (512 aa).

A signal peptide spans Met-1–Ser-23. The Extracellular segment spans residues Ser-24–Ile-242. Residues Asn-47 and Asn-164 are each glycosylated (N-linked (GlcNAc...) asparagine). 2 disulfide bridges follow: Cys-151–Cys-165 and Cys-215–Cys-216. A helical membrane pass occupies residues Pro-243–Pro-258. At Ser-259–Asp-260 the chain is on the cytoplasmic side. The chain crosses the membrane as a helical span at residues Cys-261–Val-277. A Na(+)-binding site is contributed by Glu-263. At Phe-278–Tyr-299 the chain is on the extracellular side. The chain crosses the membrane as a helical span at residues Leu-300–Leu-318. The Cytoplasmic segment spans residues Asn-319 to Val-482. The tract at residues Glu-356–Gln-389 is disordered. The span at Gly-359–Gly-376 shows a compositional bias: gly residues. The helical transmembrane segment at Ile-483–Gly-501 threads the bilayer. Residues Leu-502–Ser-512 are Extracellular-facing.

Belongs to the ligand-gated ion channel (TC 1.A.9) family. Acetylcholine receptor (TC 1.A.9.1) subfamily. Alpha-3/CHRNA3 sub-subfamily. As to quaternary structure, neuronal AChR is composed of two different types of subunits: alpha and beta. CHRNA3/Alpha-3 subunit can be combined to CHRNB2/beta-2 or CHRNB4/beta-4 to give rise to functional receptors. Expressed in retina and brain.

It is found in the synaptic cell membrane. The protein resides in the cell membrane. The protein localises to the endoplasmic reticulum. It localises to the golgi apparatus. It catalyses the reaction K(+)(in) = K(+)(out). The enzyme catalyses Na(+)(in) = Na(+)(out). The catalysed reaction is Ca(2+)(in) = Ca(2+)(out). Activated by a myriad of ligands such as acetylcholine, cytisine, nicotine, choline and epibatidine. The heteropentamer CHRNA3:CHRNB2 activity is blocked by alpha-conotoxins ImI, ImII, PnIA, GID and MII. The heteropentamer CHRNA3:CHRNB4 activity is blocked by the alpha-conotoxin ImI and AuIB. Its function is as follows. Component of neuronal acetylcholine receptors (nAChRs) that function as pentameric, ligand-gated cation channels with high calcium permeability among other activities. nAChRs are excitatory neurotrasnmitter receptors formed by a collection of nAChR subunits known to mediate synaptic transmission in the nervous system and the neuromuscular junction. Each nAchR subunit confers differential attributes to channel properties, including activation, deactivation and desensitization kinetics, pH sensitivity, cation permeability, and binding to allosteric modulators. CHRNA3 forms heteropentameric neuronal acetylcholine receptors with CHRNB2 and CHRNB4. CHRNA3:CHRNB4 being predominant in neurons of the autonomic ganglia, it is known as ganglionic nicotinic receptor. CHRNA3:CHRNB4 also plays an important role in the habenulo-interpeduncular tract, modulating the mesolimbic dopamine system and affecting reward circuits and addiction. Hypothalamic CHRNA3:CHRNB4 nAChR activation by nicotine leads to activation of POMC neurons and a decrease in food intake. Also expressed in the urothelium where it modulates reflex bladder activity by increasing intracellular calcium through extracellular influx and basal ATP release. This chain is Neuronal acetylcholine receptor subunit alpha-3 (chrna3), found in Carassius auratus (Goldfish).